The sequence spans 179 residues: Protein GrpE (179 aa).

A disordered region spans residues 1–20 (MSEETKEEIKNEKVDEEVTE).

It belongs to the GrpE family. As to quaternary structure, homodimer.

It localises to the cytoplasm. In terms of biological role, participates actively in the response to hyperosmotic and heat shock by preventing the aggregation of stress-denatured proteins, in association with DnaK and GrpE. It is the nucleotide exchange factor for DnaK and may function as a thermosensor. Unfolded proteins bind initially to DnaJ; upon interaction with the DnaJ-bound protein, DnaK hydrolyzes its bound ATP, resulting in the formation of a stable complex. GrpE releases ADP from DnaK; ATP binding to DnaK triggers the release of the substrate protein, thus completing the reaction cycle. Several rounds of ATP-dependent interactions between DnaJ, DnaK and GrpE are required for fully efficient folding. The sequence is that of Protein GrpE from Lactococcus lactis subsp. lactis (strain IL1403) (Streptococcus lactis).